A 211-amino-acid chain; its full sequence is Ribosomal RNA small subunit methyltransferase G (211 aa).

S-adenosyl-L-methionine contacts are provided by residues Gly73, 126-127, and Arg142; that span reads IE.

This sequence belongs to the methyltransferase superfamily. RNA methyltransferase RsmG family.

It is found in the cytoplasm. The enzyme catalyses guanosine(527) in 16S rRNA + S-adenosyl-L-methionine = N(7)-methylguanosine(527) in 16S rRNA + S-adenosyl-L-homocysteine. In terms of biological role, specifically methylates the N7 position of guanine in position 527 of 16S rRNA. In Methylorubrum extorquens (strain CM4 / NCIMB 13688) (Methylobacterium extorquens), this protein is Ribosomal RNA small subunit methyltransferase G.